We begin with the raw amino-acid sequence, 122 residues long: Large ribosomal subunit protein uL18 (122 aa).

It belongs to the universal ribosomal protein uL18 family. As to quaternary structure, part of the 50S ribosomal subunit; part of the 5S rRNA/L5/L18/L25 subcomplex. Contacts the 5S and 23S rRNAs.

Its function is as follows. This is one of the proteins that bind and probably mediate the attachment of the 5S RNA into the large ribosomal subunit, where it forms part of the central protuberance. The protein is Large ribosomal subunit protein uL18 of Lachnospira eligens (strain ATCC 27750 / DSM 3376 / VPI C15-48 / C15-B4) (Eubacterium eligens).